Reading from the N-terminus, the 244-residue chain is Transcriptional activator protein CarR (244 aa).

Residues 162–227 enclose the HTH luxR-type domain; that stretch reads DNSRNALLSP…HAITKALELN (66 aa). Residues 186-205 constitute a DNA-binding region (H-T-H motif); that stretch reads YKEVSRILGISEVTVKFHIN.

This sequence belongs to the autoinducer-regulated transcriptional regulatory protein family.

Its function is as follows. Functions as an OHLL responsive transcriptional regulator which acts in the control of the biosynthesis of carbapenem antibiotics. This Pectobacterium carotovorum subsp. carotovorum (Erwinia carotovora subsp. carotovora) protein is Transcriptional activator protein CarR (carR).